Consider the following 198-residue polypeptide: Small ribosomal subunit protein uS4 (198 aa).

Residues Ser-91–Glu-151 form the S4 RNA-binding domain.

It belongs to the universal ribosomal protein uS4 family. As to quaternary structure, part of the 30S ribosomal subunit. Contacts protein S5. The interaction surface between S4 and S5 is involved in control of translational fidelity.

Functionally, one of the primary rRNA binding proteins, it binds directly to 16S rRNA where it nucleates assembly of the body of the 30S subunit. With S5 and S12 plays an important role in translational accuracy. This chain is Small ribosomal subunit protein uS4, found in Phytoplasma australiense.